A 118-amino-acid polypeptide reads, in one-letter code: Large ribosomal subunit protein uL18 (118 aa).

It belongs to the universal ribosomal protein uL18 family. In terms of assembly, part of the 50S ribosomal subunit; part of the 5S rRNA/L5/L18/L25 subcomplex. Contacts the 5S and 23S rRNAs.

Its function is as follows. This is one of the proteins that bind and probably mediate the attachment of the 5S RNA into the large ribosomal subunit, where it forms part of the central protuberance. This is Large ribosomal subunit protein uL18 from Rickettsia canadensis (strain McKiel).